Reading from the N-terminus, the 626-residue chain is Myelin-associated glycoprotein (626 aa).

A signal peptide spans 1–19; it reads MIFLTTLPLFWIMISASRG. Residues 20–325 are interaction with RTN4R and RTN4RL2; it reads GHWGAWMPSS…RTVELSVMYA (306 aa). Residues 20–516 lie on the Extracellular side of the membrane; it reads GHWGAWMPSS…HRLMWAKIGP (497 aa). One can recognise an Ig-like V-type domain in the interval 22 to 120; that stretch reads WGAWMPSSIS…LGGKYYFRGD (99 aa). Cystine bridges form between cysteine 37–cysteine 165, cysteine 42–cysteine 100, and cysteine 159–cysteine 217. 65–67 lines the a ganglioside GT1b (d18:1(4E)) pocket; sequence YPK. Asparagine 99 carries an N-linked (GlcNAc...) asparagine glycan. A ganglioside GT1b (d18:1(4E)) is bound by residues arginine 118 and 124–128; that span reads YNQYT. Ig-like C2-type domains follow at residues 139-237, 241-325, 327-412, and 413-508; these read NTPN…LDVK, VIVE…VMYA, WKPT…VEFA, and PIIL…GAHR. N-linked (GlcNAc...) asparagine glycosylation is found at asparagine 223 and asparagine 246. A disulfide bond links cysteine 261 and cysteine 305. Asparagine 315 and asparagine 332 each carry an N-linked (GlcNAc...) asparagine glycan. Cysteine 347 and cysteine 392 form a disulfide bridge. Residue asparagine 406 is glycosylated (N-linked (GlcNAc...) asparagine). 2 disulfide bridges follow: cysteine 421–cysteine 430 and cysteine 432–cysteine 488. 2 N-linked (GlcNAc...) asparagine glycosylation sites follow: asparagine 450 and asparagine 454. Residues 517-536 traverse the membrane as a helical segment; it reads VGAVVAFAILIAIVCYITQT. Cysteine 531 carries S-palmitoyl cysteine lipidation. The Cytoplasmic segment spans residues 537 to 626; sequence RRKKNVTESP…LAEYAEIRVK (90 aa). Serine 545, serine 547, and serine 549 each carry phosphoserine. A required for normal axon myelination in the central nervous system region spans residues 577 to 626; that stretch reads LGSERRLLGLRGEPPELDLSYSHSDLGKRPTKDSYTLTEELAEYAEIRVK. Residues 581-608 form a disordered region; sequence RRLLGLRGEPPELDLSYSHSDLGKRPTK.

Belongs to the immunoglobulin superfamily. SIGLEC (sialic acid binding Ig-like lectin) family. As to quaternary structure, monomer and homodimer. Interacts (via the first three N-terminal Ig-like domains) with RTN4R and RTN4RL2. Interacts with isoform 2 of BSG. N-glycosylated. Post-translationally, phosphorylated on tyrosine residues. In terms of processing, ubiquitinated, leading to proteasomal degradation. Detected in myelin. Detected in olfactory bulb and throughout the brain (at protein level). Detected in brain.

The protein localises to the cell membrane. Its subcellular location is the membrane raft. Functionally, adhesion molecule that mediates interactions between myelinating cells and neurons by binding to neuronal sialic acid-containing gangliosides and to the glycoproteins RTN4R and RTN4RL2. Not required for initial myelination, but seems to play a role in the maintenance of normal axon myelination. Protects motoneurons against apoptosis, also after injury; protection against apoptosis is probably mediated via interaction with neuronal RTN4R and RTN4RL2. Required to prevent degeneration of myelinated axons in adults; this probably depends on binding to gangliosides on the axon cell membrane. Negative regulator of neurite outgrowth; in dorsal root ganglion neurons the inhibition is mediated primarily via binding to neuronal RTN4R or RTN4RL2 and to a lesser degree via binding to neuronal gangliosides. In cerebellar granule cells the inhibition is mediated primarily via binding to neuronal gangliosides. In sensory neurons, inhibition of neurite extension depends only partially on RTN4R, RTN4RL2 and gangliosides. Inhibits axon longitudinal growth. Inhibits axon outgrowth by binding to RTN4R. Preferentially binds to alpha-2,3-linked sialic acid. Binds ganglioside Gt1b. In Rattus norvegicus (Rat), this protein is Myelin-associated glycoprotein (Mag).